Here is a 230-residue protein sequence, read N- to C-terminus: Ribosomal RNA large subunit methyltransferase E (230 aa).

S-adenosyl-L-methionine is bound by residues Gly-82, Trp-84, Asp-100, Asp-116, and Asp-140. Catalysis depends on Lys-180, which acts as the Proton acceptor.

This sequence belongs to the class I-like SAM-binding methyltransferase superfamily. RNA methyltransferase RlmE family.

The protein resides in the cytoplasm. It carries out the reaction uridine(2552) in 23S rRNA + S-adenosyl-L-methionine = 2'-O-methyluridine(2552) in 23S rRNA + S-adenosyl-L-homocysteine + H(+). In terms of biological role, specifically methylates the uridine in position 2552 of 23S rRNA at the 2'-O position of the ribose in the fully assembled 50S ribosomal subunit. This is Ribosomal RNA large subunit methyltransferase E from Granulibacter bethesdensis (strain ATCC BAA-1260 / CGDNIH1).